The following is a 153-amino-acid chain: MGKISSLPTQLFKCCFCDFLKVKMHIMSPSHLFYLGLCLLTFTSSATAGPETLCGAELVDALQFVCGDRGFYFNKPTGYGSSSRRAPQTGIVDECCFRSCDLRRLEMYCAPLKPAKSARSVRAQRHTDMPKAQKEVHLKNASRGSAGNKNYRM.

The segment at 49–77 is b; that stretch reads GPETLCGAELVDALQFVCGDRGFYFNKPT. Disulfide bonds link C54-C96, C66-C109, and C95-C100. Positions 78-89 are c; that stretch reads GYGSSSRRAPQT. An a region spans residues 90-110; the sequence is GIVDECCFRSCDLRRLEMYCA. The tract at residues 111–118 is d; the sequence is PLKPAKSA. The propeptide at 119 to 153 is e peptide; the sequence is RSVRAQRHTDMPKAQKEVHLKNASRGSAGNKNYRM. Residues 120–153 are disordered; it reads SVRAQRHTDMPKAQKEVHLKNASRGSAGNKNYRM. A compositionally biased stretch (basic and acidic residues) spans 125-138; it reads RHTDMPKAQKEVHL. The span at 142–153 shows a compositional bias: polar residues; the sequence is SRGSAGNKNYRM.

This sequence belongs to the insulin family. Forms a ternary complex with IGFR1 and ITGAV:ITGB3. Forms a ternary complex with IGFR1 and ITGA6:ITGB4. Forms a ternary complex with IGFBP3 and ALS.

The protein localises to the secreted. Its function is as follows. The insulin-like growth factors, isolated from plasma, are structurally and functionally related to insulin but have a much higher growth-promoting activity. May be a physiological regulator of [1-14C]-2-deoxy-D-glucose (2DG) transport and glycogen synthesis in osteoblasts. Stimulates glucose transport in bone-derived osteoblastic (PyMS) cells and is effective at much lower concentrations than insulin, not only regarding glycogen and DNA synthesis but also with regard to enhancing glucose uptake. May play a role in synapse maturation. Ca(2+)-dependent exocytosis of IGF1 is required for sensory perception of smell in the olfactory bulb. Acts as a ligand for IGF1R. Binds to the alpha subunit of IGF1R, leading to the activation of the intrinsic tyrosine kinase activity which autophosphorylates tyrosine residues in the beta subunit thus initiating a cascade of down-stream signaling events leading to activation of the PI3K-AKT/PKB and the Ras-MAPK pathways. Binds to integrins ITGAV:ITGB3 and ITGA6:ITGB4. Its binding to integrins and subsequent ternary complex formation with integrins and IGFR1 are essential for IGF1 signaling. Induces the phosphorylation and activation of IGFR1, MAPK3/ERK1, MAPK1/ERK2 and AKT1. As part of the MAPK/ERK signaling pathway, acts as a negative regulator of apoptosis in cardiomyocytes via promotion of STUB1/CHIP-mediated ubiquitination and degradation of ICER-type isoforms of CREM. This is Insulin-like growth factor 1 from Panthera tigris altaica (Siberian tiger).